Here is a 231-residue protein sequence, read N- to C-terminus: Uridylate kinase (231 aa).

An ATP-binding site is contributed by 6–9 (KLSG). The interval 14–19 (GEGGRG) is involved in allosteric activation by GTP. Gly-49 and Arg-53 together coordinate ATP. Residues Asp-66 and 127 to 134 (TSNPFFTT) contribute to the UMP site. Residues Thr-154, Tyr-160, and Asp-163 each coordinate ATP.

It belongs to the UMP kinase family. Homohexamer.

The protein localises to the cytoplasm. It carries out the reaction UMP + ATP = UDP + ADP. It functions in the pathway pyrimidine metabolism; CTP biosynthesis via de novo pathway; UDP from UMP (UMPK route): step 1/1. Its activity is regulated as follows. Allosterically activated by GTP. Inhibited by UTP. Catalyzes the reversible phosphorylation of UMP to UDP. This Thermotoga petrophila (strain ATCC BAA-488 / DSM 13995 / JCM 10881 / RKU-1) protein is Uridylate kinase.